The sequence spans 208 residues: Large ribosomal subunit protein uL3 (208 aa).

The tract at residues 130–168 (GGSKTHGQSDRLRAPGSVGGSSFPSRTFKGQRMAGRKGS) is disordered.

The protein belongs to the universal ribosomal protein uL3 family. Part of the 50S ribosomal subunit. Forms a cluster with proteins L14 and L19.

Functionally, one of the primary rRNA binding proteins, it binds directly near the 3'-end of the 23S rRNA, where it nucleates assembly of the 50S subunit. This chain is Large ribosomal subunit protein uL3, found in Chloroherpeton thalassium (strain ATCC 35110 / GB-78).